The following is a 144-amino-acid chain: Large ribosomal subunit protein uL15 (144 aa).

The segment at 1–48 is disordered; that stretch reads MQLNNLKPAAGSKHAKRRVGRGIGSGLGKTAGRGHKGQKSRSGGFHKV. Residues 21–31 are compositionally biased toward gly residues; that stretch reads RGIGSGLGKTA.

Belongs to the universal ribosomal protein uL15 family. Part of the 50S ribosomal subunit.

Functionally, binds to the 23S rRNA. The polypeptide is Large ribosomal subunit protein uL15 (Cupriavidus taiwanensis (strain DSM 17343 / BCRC 17206 / CCUG 44338 / CIP 107171 / LMG 19424 / R1) (Ralstonia taiwanensis (strain LMG 19424))).